The chain runs to 257 residues: Type III pantothenate kinase (257 aa).

6–13 (DCGNTNTV) provides a ligand contact to ATP. Substrate is bound at residue 107 to 110 (GPDR). D109 (proton acceptor) is an active-site residue. D129 contributes to the K(+) binding site. T132 provides a ligand contact to ATP. T184 provides a ligand contact to substrate.

This sequence belongs to the type III pantothenate kinase family. As to quaternary structure, homodimer. It depends on NH4(+) as a cofactor. K(+) is required as a cofactor.

It localises to the cytoplasm. The catalysed reaction is (R)-pantothenate + ATP = (R)-4'-phosphopantothenate + ADP + H(+). It participates in cofactor biosynthesis; coenzyme A biosynthesis; CoA from (R)-pantothenate: step 1/5. Catalyzes the phosphorylation of pantothenate (Pan), the first step in CoA biosynthesis. The polypeptide is Type III pantothenate kinase (Cereibacter sphaeroides (strain ATCC 17029 / ATH 2.4.9) (Rhodobacter sphaeroides)).